Here is a 420-residue protein sequence, read N- to C-terminus: Glucose-1-phosphate adenylyltransferase (420 aa).

Residues Tyr-107, Gly-172, 187-188 (EK), and Ser-205 each bind alpha-D-glucose 1-phosphate.

The protein belongs to the bacterial/plant glucose-1-phosphate adenylyltransferase family. As to quaternary structure, homotetramer.

It catalyses the reaction alpha-D-glucose 1-phosphate + ATP + H(+) = ADP-alpha-D-glucose + diphosphate. The protein operates within glycan biosynthesis; glycogen biosynthesis. In terms of biological role, involved in the biosynthesis of ADP-glucose, a building block required for the elongation reactions to produce glycogen. Catalyzes the reaction between ATP and alpha-D-glucose 1-phosphate (G1P) to produce pyrophosphate and ADP-Glc. This is Glucose-1-phosphate adenylyltransferase from Bradyrhizobium diazoefficiens (strain JCM 10833 / BCRC 13528 / IAM 13628 / NBRC 14792 / USDA 110).